Here is a 439-residue protein sequence, read N- to C-terminus: GTPase Obg (439 aa).

An Obg domain is found at 5–164 (TDFFDQATIV…LTLELELKML (160 aa)). The OBG-type G domain occupies 165-335 (ADVGLVGFPN…LLRRVADLLR (171 aa)). Residues 171 to 178 (GFPNAGKS), 196 to 200 (FTTLT), 217 to 220 (DIPG), 287 to 290 (NKAD), and 316 to 318 (SAA) contribute to the GTP site. Mg(2+) contacts are provided by Ser178 and Thr198. In terms of domain architecture, OCT spans 356–433 (LPEVDENAFT…IGRAELVWDD (78 aa)).

It belongs to the TRAFAC class OBG-HflX-like GTPase superfamily. OBG GTPase family. In terms of assembly, monomer. Mg(2+) is required as a cofactor.

It is found in the cytoplasm. Functionally, an essential GTPase which binds GTP, GDP and possibly (p)ppGpp with moderate affinity, with high nucleotide exchange rates and a fairly low GTP hydrolysis rate. Plays a role in control of the cell cycle, stress response, ribosome biogenesis and in those bacteria that undergo differentiation, in morphogenesis control. The protein is GTPase Obg of Chloroflexus aurantiacus (strain ATCC 29364 / DSM 637 / Y-400-fl).